Reading from the N-terminus, the 420-residue chain is Synaptosomal-associated protein 47 (420 aa).

2 consecutive t-SNARE coiled-coil homology domains span residues 110–172 and 357–419; these read AEAA…LTEL and TSEP…MKKL. Residues 338–357 form a disordered region; it reads ATHCEPSSGSQEGRPLQLQT. A compositionally biased stretch (polar residues) spans 342 to 357; sequence EPSSGSQEGRPLQLQT.

Belongs to the SVAP1 family. As to quaternary structure, forms a complex containing SNAP47, VAMP2 and STX1A. Associates with the BLOC-1 complex. Interacts with BLOC1S6.

It is found in the endomembrane system. The protein localises to the cytoplasm. Its subcellular location is the perinuclear region. In terms of biological role, may play a role in intracellular membrane fusion. This chain is Synaptosomal-associated protein 47 (SNAP47), found in Bos taurus (Bovine).